The chain runs to 1347 residues: Neurofascin (1347 aa).

A signal peptide spans 1 to 24; the sequence is MARQPPPPWVHAAFLLCLLSLGGA. Over 25 to 1217 the chain is Extracellular; it reads IEIPMDPSIQ…NQADIATQGW (1193 aa). Ig-like C2-type domains follow at residues 41-137, 143-230, 244-332, 337-424, 429-517, and 521-603; these read PTIT…LQVS, PKEN…NPFT, PSFM…ISVR, PYWL…AFVS, PPRM…VRLE, and PTRI…QDLA. Disulfide bonds link cysteine 63-cysteine 118, cysteine 162-cysteine 213, cysteine 268-cysteine 316, and cysteine 358-cysteine 408. N-linked (GlcNAc...) asparagine glycosylation occurs at asparagine 305. Residues asparagine 409 and asparagine 446 are each glycosylated (N-linked (GlcNAc...) asparagine). 2 disulfide bridges follow: cysteine 452–cysteine 501 and cysteine 543–cysteine 592. Tyrosine 481 carries the post-translational modification Phosphotyrosine. Asparagine 483 carries an N-linked (GlcNAc...) asparagine glycan. Position 485 is a phosphoserine (serine 485). Fibronectin type-III domains lie at 630–725, 730–823, 828–930, and 934–1030; these read RPRD…TSGA, NPGD…SGED, APTE…TPEG, and APRR…PNEA. Positions 713–740 are disordered; it reads PSLPSERYRTSGAPPESNPGDVKGEGTR. N-linked (GlcNAc...) asparagine glycans are attached at residues asparagine 752 and asparagine 778. A disordered region spans residues 915–934; it reads GDGPRSETKEFTTPEGVPSA. Residues 916-926 show a composition bias toward basic and acidic residues; sequence DGPRSETKEFT. N-linked (GlcNAc...) asparagine glycans are attached at residues asparagine 973 and asparagine 988. Disordered stretches follow at residues 1011–1040 and 1090–1111; these read TQVG…PTLP and TTAA…TKIH. Pro residues predominate over residues 1024-1040; that stretch reads PAPPNEATPTAAPPTLP. Residues 1090 to 1105 are compositionally biased toward low complexity; it reads TTAAATTTTESPPTTT. The Fibronectin type-III 5 domain occupies 1114 to 1206; it reads APDEQSIWNV…ITFMTSTAYT (93 aa). A helical transmembrane segment spans residues 1218–1238; the sequence is FIGLMCAIALLVLILLIVCFI. Topologically, residues 1239–1347 are cytoplasmic; sequence KRSRGGKYPV…SPVNAIYSLA (109 aa). Positions 1248 to 1347 are disordered; the sequence is VREKKDVPLG…SPVNAIYSLA (100 aa). Positions 1261–1272 are enriched in acidic residues; sequence PKEEDGSFDYSD. 7 positions are modified to phosphoserine: serine 1267, serine 1281, serine 1294, serine 1297, serine 1333, serine 1334, and serine 1338. A compositionally biased stretch (polar residues) spans 1278-1291; sequence LQGSQTSLDGTIKQ.

The protein belongs to the immunoglobulin superfamily. L1/neurofascin/NgCAM family. In terms of assembly, horseshoe-shaped homodimer. Probable constituent of a NFASC/NRCAM/ankyrin-G complex. Associates with the sodium channel beta-1 (SCN1B) and beta-3 (SCN3B) subunits. Interacts with GLDN/gliomedin. Interacts with MYOC.

It localises to the cell membrane. The protein resides in the cell junction. The protein localises to the paranodal septate junction. Functionally, cell adhesion, ankyrin-binding protein which may be involved in neurite extension, axonal guidance, synaptogenesis, myelination and neuron-glial cell interactions. The sequence is that of Neurofascin (NFASC) from Homo sapiens (Human).